The primary structure comprises 226 residues: DNA mismatch repair protein MutH (226 aa).

Belongs to the MutH family.

The protein resides in the cytoplasm. Sequence-specific endonuclease that cleaves unmethylated GATC sequences. It is involved in DNA mismatch repair. The sequence is that of DNA mismatch repair protein MutH from Vibrio campbellii (strain ATCC BAA-1116).